A 418-amino-acid polypeptide reads, in one-letter code: Serpin A9 (418 aa).

The first 25 residues, 1 to 25 (MGSSSFYRVLLLVGFCAPIFCMLSS), serve as a signal peptide directing secretion. 3 N-linked (GlcNAc...) asparagine glycosylation sites follow: asparagine 103, asparagine 213, and asparagine 224.

The protein belongs to the serpin family.

It is found in the secreted. The protein is Serpin A9 (Serpina9) of Mus musculus (Mouse).